A 274-amino-acid polypeptide reads, in one-letter code: Oxidized low-density lipoprotein receptor 1 (274 aa).

Over residues 1–16 the composition is skewed to basic and acidic residues; sequence MAVDDLKVKPMKDQPD. Residues 1-25 form a disordered region; the sequence is MAVDDLKVKPMKDQPDQKSNGKKPK. The Cytoplasmic portion of the chain corresponds to 1-31; the sequence is MAVDDLKVKPMKDQPDQKSNGKKPKGLRFLS. Residues 32–54 form a helical; Signal-anchor for type II membrane protein membrane-spanning segment; the sequence is SPWWCPAAVALGVLCLGSLMTII. Residues Cys-36 and Cys-46 are each lipidated (S-palmitoyl cysteine). Residues 55 to 150 form a neck region; that stretch reads MLGMQLLQVS…SGPCPEDWLW (96 aa). The Extracellular segment spans residues 55–274; sequence MLGMQLLQVS…QKKANLLRSE (220 aa). Asn-73 and Asn-139 each carry an N-linked (GlcNAc...) asparagine glycan. The stretch at 84–139 forms a coiled coil; the sequence is QVLAQQQAEAASQESQRELKEMIETLAKRLDEKSKKQMELNHQYLNLQEALKRMDN. Cystine bridges form between Cys-144–Cys-155, Cys-172–Cys-264, and Cys-243–Cys-256. Residues 151-265 enclose the C-type lectin domain; sequence HGKNCYLFSS…CILVAYSICQ (115 aa).

In terms of assembly, homodimer; disulfide-linked. May form a hexamer composed of 3 homodimers. Interacts with HSP70. In terms of processing, N-glycosylated.

It localises to the cell membrane. The protein localises to the membrane raft. It is found in the secreted. In terms of biological role, receptor that mediates the recognition, internalization and degradation of oxidatively modified low density lipoprotein (oxLDL) by vascular endothelial cells. OxLDL is a marker of atherosclerosis that induces vascular endothelial cell activation and dysfunction, resulting in pro-inflammatory responses, pro-oxidative conditions and apoptosis. Its association with oxLDL induces the activation of NF-kappa-B through an increased production of intracellular reactive oxygen and a variety of pro-atherogenic cellular responses including a reduction of nitric oxide (NO) release, monocyte adhesion and apoptosis. In addition to binding oxLDL, it acts as a receptor for the HSP70 protein involved in antigen cross-presentation to naive T-cells in dendritic cells, thereby participating in cell-mediated antigen cross-presentation. Also involved in inflammatory process, by acting as a leukocyte-adhesion molecule at the vascular interface in endotoxin-induced inflammation. Also acts as a receptor for advanced glycation end (AGE) products, activated platelets, monocytes, apoptotic cells and both Gram-negative and Gram-positive bacteria. This is Oxidized low-density lipoprotein receptor 1 (OLR1) from Oryctolagus cuniculus (Rabbit).